The chain runs to 633 residues: Carbon monoxide dehydrogenase 2 (633 aa).

Positions 44, 53, 56, 61, and 73 each coordinate [4Fe-4S] cluster. His264, Cys343, Cys453, Cys484, and Cys525 together coordinate [Ni-4Fe-5S] cluster.

This sequence belongs to the Ni-containing carbon monoxide dehydrogenase family. Homodimer. [4Fe-4S] cluster serves as cofactor. Requires [Ni-4Fe-5S] cluster as cofactor.

The catalysed reaction is CO + 2 oxidized [2Fe-2S]-[ferredoxin] + H2O = 2 reduced [2Fe-2S]-[ferredoxin] + CO2 + 2 H(+). In terms of biological role, CODH oxidizes carbon monoxide coupled, via CooF, to the reduction of a hydrogen cation by a hydrogenase (possibly CooH). This Methanosarcina acetivorans (strain ATCC 35395 / DSM 2834 / JCM 12185 / C2A) protein is Carbon monoxide dehydrogenase 2 (cooS2).